A 375-amino-acid polypeptide reads, in one-letter code: Coproporphyrin III ferrochelatase (375 aa).

2 residues coordinate Fe-coproporphyrin III: Ser-59 and Tyr-128. The Fe(2+) site is built by His-191 and Glu-286.

The protein belongs to the ferrochelatase family.

The protein localises to the cytoplasm. It carries out the reaction Fe-coproporphyrin III + 2 H(+) = coproporphyrin III + Fe(2+). Its pathway is porphyrin-containing compound metabolism; protoheme biosynthesis. Functionally, involved in coproporphyrin-dependent heme b biosynthesis. Catalyzes the insertion of ferrous iron into coproporphyrin III to form Fe-coproporphyrin III. The sequence is that of Coproporphyrin III ferrochelatase from Streptomyces coelicolor (strain ATCC BAA-471 / A3(2) / M145).